Here is a 76-residue protein sequence, read N- to C-terminus: Spore germination protein-like protein YdzR (76 aa).

Belongs to the GerPA/GerPF family.

The chain is Spore germination protein-like protein YdzR (ydzR) from Bacillus subtilis (strain 168).